Here is a 413-residue protein sequence, read N- to C-terminus: Alpha-1-antitrypsin 1-2 (413 aa).

An N-terminal signal peptide occupies residues 1 to 24 (MTPSISWGLLLLAGLCCMVPSFLA). N-linked (GlcNAc...) asparagine glycosylation is found at N64, N101, and N265. Residues 368–387 (AATVFEAVPMSMPPILRFDH) form an RCL region.

It belongs to the serpin family.

Its subcellular location is the secreted. Functionally, inhibitor of serine proteases. Its primary target is elastase, but it also has a moderate affinity for plasmin and thrombin. This Mus musculus (Mouse) protein is Alpha-1-antitrypsin 1-2 (Serpina1b).